The chain runs to 99 residues: Large ribosomal subunit protein eL21 (99 aa).

It belongs to the eukaryotic ribosomal protein eL21 family.

The polypeptide is Large ribosomal subunit protein eL21 (Ignicoccus hospitalis (strain KIN4/I / DSM 18386 / JCM 14125)).